A 374-amino-acid chain; its full sequence is Pyruvate dehydrogenase E1 component subunit beta-1, mitochondrial (374 aa).

Residues M1–Y34 constitute a mitochondrion transit peptide. E97 is a thiamine diphosphate binding site. Residues I150, A198, I199, and D201 each coordinate K(+).

In terms of assembly, tetramer of 2 alpha and 2 beta subunits. Requires thiamine diphosphate as cofactor.

The protein localises to the mitochondrion matrix. The catalysed reaction is N(6)-[(R)-lipoyl]-L-lysyl-[protein] + pyruvate + H(+) = N(6)-[(R)-S(8)-acetyldihydrolipoyl]-L-lysyl-[protein] + CO2. In terms of biological role, the pyruvate dehydrogenase complex catalyzes the overall conversion of pyruvate to acetyl-CoA and CO(2). It contains multiple copies of three enzymatic components: pyruvate dehydrogenase (E1), dihydrolipoamide acetyltransferase (E2) and lipoamide dehydrogenase (E3). The sequence is that of Pyruvate dehydrogenase E1 component subunit beta-1, mitochondrial from Oryza sativa subsp. japonica (Rice).